The sequence spans 69 residues: DNA-directed RNA polymerase subunit omega (69 aa).

The protein belongs to the RNA polymerase subunit omega family. In terms of assembly, the RNAP catalytic core consists of 2 alpha, 1 beta, 1 beta' and 1 omega subunit. When a sigma factor is associated with the core the holoenzyme is formed, which can initiate transcription.

It carries out the reaction RNA(n) + a ribonucleoside 5'-triphosphate = RNA(n+1) + diphosphate. Promotes RNA polymerase assembly. Latches the N- and C-terminal regions of the beta' subunit thereby facilitating its interaction with the beta and alpha subunits. The protein is DNA-directed RNA polymerase subunit omega of Geotalea daltonii (strain DSM 22248 / JCM 15807 / FRC-32) (Geobacter daltonii).